Consider the following 573-residue polypeptide: LysM domain-containing protein ARB_01155/01156 (573 aa).

The first 18 residues, 1 to 18, serve as a signal peptide directing secretion; it reads MIPRNLISGLFLLPFVVA. Residues Asn46, Asn71, and Asn283 are each glycosylated (N-linked (GlcNAc...) asparagine). Residues 373–419 enclose the LysM domain; the sequence is RYYEVVAGDQCNTIALHFGITVDAFLSLNTQIDERCSNLWIAYAYCV. The segment at 375–405 is lysM domain; that stretch reads YEVVAGDQCNTIALHFGITVDAFLSLNTQID.

It is found in the secreted. Functionally, might have a role in sequestration of chitin oligosaccharides (breakdown products of fungal cell walls that are released during invasion and act as triggers of host immunity) to dampen host defense. The polypeptide is LysM domain-containing protein ARB_01155/01156 (Arthroderma benhamiae (strain ATCC MYA-4681 / CBS 112371) (Trichophyton mentagrophytes)).